The primary structure comprises 561 residues: Carboxylesterase 1F (561 aa).

The signal sequence occupies residues 1–17 (MFLSTLFLVSLATCVIC). Cys87 and Cys116 form a disulfide bridge. The active-site Acyl-ester intermediate is the Ser221. Cys273 and Cys284 are joined by a disulfide. Active-site charge relay system residues include Glu353 and His466. The short motif at 558-561 (HNEL) is the Prevents secretion from ER element.

The protein belongs to the type-B carboxylesterase/lipase family. In terms of tissue distribution, expressed in liver, white and brown adipose tissue, kidney, intestine, adrenal, heart and ovary. Not detected in muscle, lung, testis, brain and spleen.

It is found in the lipid droplet. Its subcellular location is the cytoplasm. The protein resides in the cytosol. The protein localises to the endoplasmic reticulum. It localises to the microsome. The enzyme catalyses a carboxylic ester + H2O = an alcohol + a carboxylate + H(+). It carries out the reaction all-trans-retinyl hexadecanoate + H2O = all-trans-retinol + hexadecanoate + H(+). Its function is as follows. Involved in the detoxification of xenobiotics and in the activation of ester and amide prodrugs. Hydrolyzes retinyl esters. Hydrolyzes p-nitrophenyl butyrate (PNPB), triacylglycerol and monoacylglycerol. Shows higher activity against PNPB, a short-chain fatty acid ester, than against triolein, a long-chain fatty acid ester. Shows no detectable activity against diacylglycerol, cholesterol ester or phospholipids. May play a role in adipocyte lipolysis. The sequence is that of Carboxylesterase 1F from Mus musculus (Mouse).